Consider the following 277-residue polypeptide: Mannosyl-3-phosphoglycerate phosphatase (277 aa).

The active-site Nucleophile is the D13. Residues D13, D15, and D219 each coordinate Mg(2+).

The protein belongs to the HAD-like hydrolase superfamily. MPGP family. Mg(2+) serves as cofactor.

It localises to the cytoplasm. It carries out the reaction 2-O-(alpha-D-mannosyl)-3-phosphoglycerate + H2O = (2R)-2-O-(alpha-D-mannosyl)-glycerate + phosphate. It participates in carbohydrate biosynthesis; 2-(alpha-D-mannosyl)-D-glycerate biosynthesis; 2-(alpha-D-mannosyl)-D-glycerate from GDP-alpha-D-mannose (MPG route): step 2/2. In terms of biological role, hydrolyzes mannosyl-3-phosphoglycerate (MPG) to form the osmolyte mannosylglycerate (MG). The chain is Mannosyl-3-phosphoglycerate phosphatase from Aeropyrum pernix (strain ATCC 700893 / DSM 11879 / JCM 9820 / NBRC 100138 / K1).